Consider the following 104-residue polypeptide: UPF0145 protein RD1_2695 (104 aa).

The protein belongs to the UPF0145 family.

The protein is UPF0145 protein RD1_2695 of Roseobacter denitrificans (strain ATCC 33942 / OCh 114) (Erythrobacter sp. (strain OCh 114)).